Reading from the N-terminus, the 386-residue chain is tRNA-specific 2-thiouridylase MnmA (386 aa).

ATP is bound by residues 9–16 (GMSGGVDS) and M35. Residues 95-97 (NPD) form an interaction with target base in tRNA region. C100 functions as the Nucleophile in the catalytic mechanism. Residues C100 and C196 are joined by a disulfide bond. G124 serves as a coordination point for ATP. The interval 146–148 (KDQ) is interaction with tRNA. C196 (cysteine persulfide intermediate) is an active-site residue. The interaction with tRNA stretch occupies residues 308 to 309 (RY).

This sequence belongs to the MnmA/TRMU family.

The protein localises to the cytoplasm. The enzyme catalyses S-sulfanyl-L-cysteinyl-[protein] + uridine(34) in tRNA + AH2 + ATP = 2-thiouridine(34) in tRNA + L-cysteinyl-[protein] + A + AMP + diphosphate + H(+). In terms of biological role, catalyzes the 2-thiolation of uridine at the wobble position (U34) of tRNA, leading to the formation of s(2)U34. This is tRNA-specific 2-thiouridylase MnmA from Burkholderia thailandensis (strain ATCC 700388 / DSM 13276 / CCUG 48851 / CIP 106301 / E264).